The following is a 155-amino-acid chain: Small ribosomal subunit protein uS9 (155 aa).

Belongs to the universal ribosomal protein uS9 family.

This is Small ribosomal subunit protein uS9 from Allorhizobium ampelinum (strain ATCC BAA-846 / DSM 112012 / S4) (Agrobacterium vitis (strain S4)).